Reading from the N-terminus, the 422-residue chain is Metallocarboxypeptidase A (422 aa).

Residues 1-17 form the signal peptide; that stretch reads MRSVLSLALLAANVVTA. Positions 18–112 are cleaved as a propeptide — activation peptide; sequence AVVSPFDYSG…FEAYSAGYAP (95 aa). The Peptidase M14 domain maps to 119 to 419; it reads SYHSYQDHIS…AGTVAMLKAV (301 aa). Positions 179 and 182 each coordinate Zn(2+). Substrate is bound by residues 179–182, Arg-237, and 254–255; these read HARE and NR. Cys-248 and Cys-271 are disulfide-bonded. His-309 contributes to the Zn(2+) binding site. 310 to 311 lines the substrate pocket; the sequence is SY. Glu-385 serves as the catalytic Proton donor/acceptor.

This sequence belongs to the peptidase M14 family. Requires Zn(2+) as cofactor.

The protein resides in the secreted. Its function is as follows. Extracellular metalloprotease that contributes to pathogenicity. The chain is Metallocarboxypeptidase A (MCPA) from Trichophyton tonsurans (Scalp ringworm fungus).